Consider the following 331-residue polypeptide: Beta-ketoacyl-[acyl-carrier-protein] synthase III (331 aa).

Residues cysteine 115 and histidine 255 contribute to the active site. The interval 256–260 (QANFR) is ACP-binding. The active site involves asparagine 285.

It belongs to the thiolase-like superfamily. FabH family. As to quaternary structure, homodimer.

It is found in the cytoplasm. It catalyses the reaction malonyl-[ACP] + acetyl-CoA + H(+) = 3-oxobutanoyl-[ACP] + CO2 + CoA. It functions in the pathway lipid metabolism; fatty acid biosynthesis. Its function is as follows. Catalyzes the condensation reaction of fatty acid synthesis by the addition to an acyl acceptor of two carbons from malonyl-ACP. Catalyzes the first condensation reaction which initiates fatty acid synthesis and may therefore play a role in governing the total rate of fatty acid production. Possesses both acetoacetyl-ACP synthase and acetyl transacylase activities. Its substrate specificity determines the biosynthesis of branched-chain and/or straight-chain of fatty acids. The polypeptide is Beta-ketoacyl-[acyl-carrier-protein] synthase III (Helicobacter pylori (strain ATCC 700392 / 26695) (Campylobacter pylori)).